A 1500-amino-acid polypeptide reads, in one-letter code: Host cell factor (1500 aa).

Kelch repeat units follow at residues Leu85–Thr133, Met135–His181, Lys189–Asp237, Asn259–Asn307, and Lys308–Ser373. A Phosphoserine modification is found at Ser477. A compositionally biased stretch (polar residues) spans Leu517–Ala528. Residues Leu517–Thr543 are disordered. A phosphoserine mark is found at Ser958 and Ser966. Positions Ser1024 to Gln1061 are disordered. A compositionally biased stretch (low complexity) spans Asn1036–Ala1047. Thr1126 bears the Phosphothreonine mark. Positions Ile1161 to Asn1185 are disordered. Basic and acidic residues predominate over residues Glu1166 to Gln1178. 2 consecutive Fibronectin type-III domains span residues Val1244–Pro1341 and Ala1346–Ala1457. The disordered stretch occupies residues Ala1458 to Asp1500. The short motif at Lys1470–Arg1495 is the Bipartite nuclear localization signal element. Residues Thr1477 to Cys1488 show a composition bias toward polar residues. Ser1489 carries the phosphoserine modification. Over residues Pro1490–Asp1500 the composition is skewed to basic residues.

Core component of several methyltransferase-containing complexes. Component of the SET1 complex, composed at least of the catalytic subunit Set1, wds/WDR5, Wdr82, Rbbp5, ash2, Cfp1/CXXC1, hcf and Dpy-30L1. Component of the MLL3/4 complex composed at least of the catalytic subunit trr, ash2, Rbbp5, Dpy-30L1, wds, hcf, ptip, Pa1, Utx, Lpt and Ncoa6. Component of the Ada2a-containing (ATAC) complex composed of at least Ada2a, Atac1, Hcf, Ada3, Gcn5, Mocs2B, Charac-14, Atac3, Atac2, NC2beta and wds. Post-translationally, proteolytic cleavage occurs between amino acids 900 and 1100 within the non-conserved central region, giving rise to two independent but tightly associated N- and C-terminal subunits.

Its subcellular location is the nucleus. Its function is as follows. May be involved in control of the cell cycle. The protein is Host cell factor of Drosophila melanogaster (Fruit fly).